Here is a 418-residue protein sequence, read N- to C-terminus: MKATDLFHVTVLVAGALALEHQQPLIGDLSQDLNHIIDSSPLLSFHRALVQIPSISEHEKNVGEYVLDFLSSQNLTVEKQIVTPESDTEEERFNIYAYVGKNRQPDVLVTSHIDTVPPFIPYSLHAPTSDTSFIRTDLVIAGRGTVDAKASVAAIVFAALETLDENPNASIGLLFDVGEENSGVGMKHFSNSELNPTPPTYHTVIFGEPTELSLVAAHKGTLGFKLVAEGKAAHSGYPWLGESAISSLIPVLAHLDTLQDLPPEKGGLLRSETLGKSTLNIGRVHGGIAANVVPAHAEAAISVRLAAGTPEDTRTIIERAVAKVTSGDRSVYPDFGDRKAGAPPQYFDVDVDGFEVITVNYGTDAPALKIHDQRTQRVKRYLYGPGSILVAHADNEAITVGELEEAVRGYKRLIAASL.

An N-terminal signal peptide occupies residues 1–18 (MKATDLFHVTVLVAGALA). The N-linked (GlcNAc...) asparagine glycan is linked to Asn74. A Zn(2+)-binding site is contributed by Asp147. An N-linked (GlcNAc...) asparagine glycan is attached at Asn168. Catalysis depends on Glu179, which acts as the Proton acceptor. Glu180 serves as a coordination point for Zn(2+).

This sequence belongs to the peptidase M20A family. Requires Zn(2+) as cofactor.

The protein resides in the secreted. The chain is Probable carboxypeptidase AFLA_000940 from Aspergillus flavus (strain ATCC 200026 / FGSC A1120 / IAM 13836 / NRRL 3357 / JCM 12722 / SRRC 167).